The primary structure comprises 458 residues: Cysteine--tRNA ligase (458 aa).

Residue C27 participates in Zn(2+) binding. A 'HIGH' region motif is present at residues 29–39 (MTVYDYMHIGH). Residues C208, H233, and E237 each coordinate Zn(2+). Positions 265-269 (KMSKS) match the 'KMSKS' region motif. K268 contacts ATP.

It belongs to the class-I aminoacyl-tRNA synthetase family. As to quaternary structure, monomer. Zn(2+) serves as cofactor.

The protein resides in the cytoplasm. The catalysed reaction is tRNA(Cys) + L-cysteine + ATP = L-cysteinyl-tRNA(Cys) + AMP + diphosphate. This chain is Cysteine--tRNA ligase, found in Coxiella burnetii (strain Dugway 5J108-111).